The following is a 331-amino-acid chain: Ribosomal RNA small subunit methyltransferase H (331 aa).

Residues 38–40 (GGY), aspartate 56, phenylalanine 83, aspartate 100, and glutamine 107 contribute to the S-adenosyl-L-methionine site. Residues 287-331 (DEAELAENPRARSARLRVGVRTDAPAGKVDPQALGTPLIPKKGRR) form a disordered region.

Belongs to the methyltransferase superfamily. RsmH family.

It is found in the cytoplasm. It carries out the reaction cytidine(1402) in 16S rRNA + S-adenosyl-L-methionine = N(4)-methylcytidine(1402) in 16S rRNA + S-adenosyl-L-homocysteine + H(+). Functionally, specifically methylates the N4 position of cytidine in position 1402 (C1402) of 16S rRNA. In Cereibacter sphaeroides (strain ATCC 17023 / DSM 158 / JCM 6121 / CCUG 31486 / LMG 2827 / NBRC 12203 / NCIMB 8253 / ATH 2.4.1.) (Rhodobacter sphaeroides), this protein is Ribosomal RNA small subunit methyltransferase H.